The sequence spans 446 residues: Elongation factor 1-alpha (446 aa).

The 226-residue stretch at 5–230 (KNHLNLVVIG…DALDQPKRPK (226 aa)) folds into the tr-type G domain. Positions 14–21 (GHVDSGKS) are G1. 14–21 (GHVDSGKS) contributes to the GTP binding site. The interval 70–74 (GITID) is G2. The segment at 91-94 (DAPG) is G3. GTP-binding positions include 91-95 (DAPGH) and 153-156 (NKMD). Residues 153–156 (NKMD) form a G4 region. A G5 region spans residues 194–196 (SGW).

It belongs to the TRAFAC class translation factor GTPase superfamily. Classic translation factor GTPase family. EF-Tu/EF-1A subfamily.

The protein resides in the cytoplasm. Its function is as follows. This protein promotes the GTP-dependent binding of aminoacyl-tRNA to the A-site of ribosomes during protein biosynthesis. This chain is Elongation factor 1-alpha (EFAA), found in Stylonychia lemnae (Ciliate).